The following is a 653-amino-acid chain: Leishmanolysin homolog (653 aa).

The first 44 residues, 1–44 (MHAPPTATRRSGPRRTHGIMARLVRLAAGVLVVTLVIGALTALS), serve as a signal peptide directing secretion. Positions 45-113 (ADDAKTHPHK…ALAGDSAPDV (69 aa)) are cleaved as a propeptide — activation peptide. 2 disulfide bridges follow: cysteine 138–cysteine 155 and cysteine 203–cysteine 242. Histidine 276 contacts Zn(2+). The active site involves glutamate 277. Residues histidine 280 and histidine 346 each contribute to the Zn(2+) site. 7 disulfides stabilise this stretch: cysteine 326-cysteine 398, cysteine 405-cysteine 468, cysteine 418-cysteine 437, cysteine 427-cysteine 502, cysteine 479-cysteine 524, cysteine 529-cysteine 579, and cysteine 549-cysteine 572. Residues asparagine 383 and asparagine 409 are each glycosylated (N-linked (GlcNAc...) asparagine). An N-linked (GlcNAc...) asparagine glycan is attached at asparagine 569. Residues 590 to 631 (ESMTNSGSGSSRPAPVEPSGSGSGSSAATTAPSPTRDGSAAA) form a disordered region. Positions 591-600 (SMTNSGSGSS) are enriched in polar residues. Positions 607–631 (PSGSGSGSSAATTAPSPTRDGSAAA) are enriched in low complexity. A lipid anchor (GPI-anchor amidated serine) is attached at serine 628. Positions 629-653 (AAADRIAPRTAAVALLALAVAAACV) are cleaved as a propeptide — removed in mature form.

Belongs to the peptidase M8 family. It depends on Zn(2+) as a cofactor.

It is found in the cell membrane. It carries out the reaction Preference for hydrophobic residues at P1 and P1' and basic residues at P2' and P3'. A model nonapeptide is cleaved at -Ala-Tyr-|-Leu-Lys-Lys-.. In terms of biological role, plays an integral role during the infection of macrophages in the mammalian host. This chain is Leishmanolysin homolog (gp63), found in Crithidia fasciculata.